The following is a 1200-amino-acid chain: DNA polymerase subunit gamma-1 (1200 aa).

Disordered regions lie at residues 471–515 (QKKT…RPSM) and 667–688 (MDLSSEVPATAKAKKRNNSSEH). A compositionally biased stretch (basic residues) spans 472–481 (KKTKISKKQK). Over residues 494-512 (LVEDHNEDPGPPTEKEESR) the composition is skewed to basic and acidic residues.

It belongs to the DNA polymerase type-A family. In terms of assembly, heterotrimer composed of a catalytic subunit and a homodimer of accessory subunits. Mg(2+) is required as a cofactor.

The protein localises to the mitochondrion. The protein resides in the mitochondrion matrix. It is found in the mitochondrion nucleoid. It catalyses the reaction DNA(n) + a 2'-deoxyribonucleoside 5'-triphosphate = DNA(n+1) + diphosphate. Functionally, involved in the replication of mitochondrial DNA. Associates with mitochondrial DNA. This is DNA polymerase subunit gamma-1 (polg) from Xenopus laevis (African clawed frog).